The chain runs to 504 residues: Cytochrome P450 monooxygenase gliF (504 aa).

A helical membrane pass occupies residues 13–31; that stretch reads AVAVSFGVGLLYWVYRLLL. N-linked (GlcNAc...) asparagine glycans are attached at residues Asn197 and Asn299. Residue Cys449 participates in heme binding.

Belongs to the cytochrome P450 family. Heme serves as cofactor.

It is found in the membrane. Its pathway is mycotoxin biosynthesis. Its function is as follows. Cytochrome P450 monooxygenase; part of the gene cluster that mediates the biosynthesis of gliotoxin, a member of the epipolythiodioxopiperazine (ETP) class of toxins characterized by a disulfide bridged cyclic dipeptide. The first step in gliotoxin biosynthesis is the condensation of serine and phenylalanine to form the cyclo-L-phenylalanyl-L-serine diketopiperazine (DKP) by the NRPS gliP. GliP is also able to produce the DKP cyclo-L-tryptophanyl-L-serine, suggesting that the substrate specificity of the first adenylation (A) domain in gliP is sufficiently relaxed to accommodate both L-Phe and L-Trp. The cytochrome P450 monooxygenase gliC has been shown to catalyze the subsequent hydroxylation of the alpha-carbon of L-Phe in cyclo-L-phenylalanyl-L-serine whereas the second cytochrome P450 enzyme, gliF, is presumably involved in the modification of the DKP side chain. The glutathione S-transferase (GST) gliG then forms a bis-glutathionylated biosynthetic intermediate which is responsible for the sulfurization of gliotoxin. This bis-glutathionylated intermediate is subsequently processed by the gamma-glutamyl cyclotransferase gliK to remove both gamma-glutamyl moieties. Subsequent processing via gliI yields a biosynthetic intermediate, which is N-methylated via the N-methyltransferase gliN, before the gliotoxin oxidoreductase gliT-mediated disulfide bridge closure. GliN-mediated amide methylation confers stability to ETP, damping the spontaneous formation of tri- and tetrasulfides. Intracellular dithiol gliotoxin oxidized by gliT is subsequently effluxed by gliA. Gliotoxin contributes to pathogenesis during invasive aspergillosis. In macrophages and neutrophils, gliotoxin showed inhibition of various different cell functions including cytokine production, antigen presentation, phagocytosis, and production of reactive oxygen species. The polypeptide is Cytochrome P450 monooxygenase gliF (Aspergillus fumigatus (strain ATCC MYA-4609 / CBS 101355 / FGSC A1100 / Af293) (Neosartorya fumigata)).